The primary structure comprises 211 residues: tRNA (guanine-N(7)-)-methyltransferase (211 aa).

4 residues coordinate S-adenosyl-L-methionine: glutamate 44, aspartate 69, aspartate 96, and aspartate 118. Aspartate 118 is a catalytic residue. Lysine 122 contacts substrate. An interaction with RNA region spans residues 124–129 (RHEKRR). Substrate is bound by residues aspartate 154 and 191–194 (TEYE).

It belongs to the class I-like SAM-binding methyltransferase superfamily. TrmB family.

It catalyses the reaction guanosine(46) in tRNA + S-adenosyl-L-methionine = N(7)-methylguanosine(46) in tRNA + S-adenosyl-L-homocysteine. It participates in tRNA modification; N(7)-methylguanine-tRNA biosynthesis. Functionally, catalyzes the formation of N(7)-methylguanine at position 46 (m7G46) in tRNA. This is tRNA (guanine-N(7)-)-methyltransferase from Streptococcus equi subsp. equi (strain 4047).